Reading from the N-terminus, the 283-residue chain is Elongation factor Ts (283 aa).

The interval 80-83 is involved in Mg(2+) ion dislocation from EF-Tu; sequence TDFV.

The protein belongs to the EF-Ts family.

Its subcellular location is the cytoplasm. Associates with the EF-Tu.GDP complex and induces the exchange of GDP to GTP. It remains bound to the aminoacyl-tRNA.EF-Tu.GTP complex up to the GTP hydrolysis stage on the ribosome. This Shigella boydii serotype 18 (strain CDC 3083-94 / BS512) protein is Elongation factor Ts.